The following is a 458-amino-acid chain: Argininosuccinate lyase (458 aa).

It belongs to the lyase 1 family. Argininosuccinate lyase subfamily.

The protein localises to the cytoplasm. It carries out the reaction 2-(N(omega)-L-arginino)succinate = fumarate + L-arginine. Its pathway is amino-acid biosynthesis; L-arginine biosynthesis; L-arginine from L-ornithine and carbamoyl phosphate: step 3/3. The sequence is that of Argininosuccinate lyase from Geotalea daltonii (strain DSM 22248 / JCM 15807 / FRC-32) (Geobacter daltonii).